We begin with the raw amino-acid sequence, 239 residues long: NADH-quinone oxidoreductase chain 2 (239 aa).

4 residues coordinate [2Fe-2S] cluster: cysteine 96, cysteine 101, cysteine 137, and cysteine 141.

Belongs to the complex I 24 kDa subunit family. NDH-1 is composed of at least 14 different subunits, Nqo1 to Nqo14. The complex has a L-shaped structure, with the hydrophobic arm (subunits Nqo7, Nqo8, Nqo10 to Nqo14) embedded in the inner membrane and the hydrophilic peripheral arm (subunits Nqo1 to Nqo6, Nqo9) protruding into the bacterial cytoplasm. The hydrophilic domain contains all the redox centers. The cofactor is [2Fe-2S] cluster.

The protein resides in the cell inner membrane. The enzyme catalyses a quinone + NADH + 5 H(+)(in) = a quinol + NAD(+) + 4 H(+)(out). Functionally, NDH-1 shuttles electrons from NADH, via FMN and iron-sulfur (Fe-S) centers, to quinones in the respiratory chain. The immediate electron acceptor for the enzyme in this species is believed to be ubiquinone. Couples the redox reaction to proton translocation (for every two electrons transferred, four hydrogen ions are translocated across the cytoplasmic membrane), and thus conserves the redox energy in a proton gradient. This is NADH-quinone oxidoreductase chain 2 (nqo2) from Paracoccus denitrificans.